The following is a 1407-amino-acid chain: DNA-directed RNA polymerase subunit beta' (1407 aa).

4 residues coordinate Zn(2+): Cys70, Cys72, Cys85, and Cys88. Positions 460, 462, and 464 each coordinate Mg(2+). Residues Cys814, Cys888, Cys895, and Cys898 each coordinate Zn(2+).

It belongs to the RNA polymerase beta' chain family. In terms of assembly, the RNAP catalytic core consists of 2 alpha, 1 beta, 1 beta' and 1 omega subunit. When a sigma factor is associated with the core the holoenzyme is formed, which can initiate transcription. It depends on Mg(2+) as a cofactor. The cofactor is Zn(2+).

It catalyses the reaction RNA(n) + a ribonucleoside 5'-triphosphate = RNA(n+1) + diphosphate. DNA-dependent RNA polymerase catalyzes the transcription of DNA into RNA using the four ribonucleoside triphosphates as substrates. This Buchnera aphidicola subsp. Acyrthosiphon pisum (strain APS) (Acyrthosiphon pisum symbiotic bacterium) protein is DNA-directed RNA polymerase subunit beta'.